Reading from the N-terminus, the 258-residue chain is Aspartate/glutamate leucyltransferase (258 aa).

The protein belongs to the R-transferase family. Bpt subfamily.

The protein resides in the cytoplasm. The enzyme catalyses N-terminal L-glutamyl-[protein] + L-leucyl-tRNA(Leu) = N-terminal L-leucyl-L-glutamyl-[protein] + tRNA(Leu) + H(+). The catalysed reaction is N-terminal L-aspartyl-[protein] + L-leucyl-tRNA(Leu) = N-terminal L-leucyl-L-aspartyl-[protein] + tRNA(Leu) + H(+). Functions in the N-end rule pathway of protein degradation where it conjugates Leu from its aminoacyl-tRNA to the N-termini of proteins containing an N-terminal aspartate or glutamate. The sequence is that of Aspartate/glutamate leucyltransferase from Rhizobium johnstonii (strain DSM 114642 / LMG 32736 / 3841) (Rhizobium leguminosarum bv. viciae).